The sequence spans 229 residues: ATP-dependent dethiobiotin synthetase BioD (229 aa).

12–17 (GVGKTV) is an ATP binding site. Residue Thr-16 participates in Mg(2+) binding. The active site involves Lys-37. Thr-41 contributes to the substrate binding site. ATP-binding positions include Asp-53, 112–115 (EGAG), and 201–203 (PAG). The Mg(2+) site is built by Asp-53 and Glu-112.

This sequence belongs to the dethiobiotin synthetase family. Homodimer. The cofactor is Mg(2+).

It is found in the cytoplasm. It carries out the reaction (7R,8S)-7,8-diammoniononanoate + CO2 + ATP = (4R,5S)-dethiobiotin + ADP + phosphate + 3 H(+). The protein operates within cofactor biosynthesis; biotin biosynthesis; biotin from 7,8-diaminononanoate: step 1/2. Its function is as follows. Catalyzes a mechanistically unusual reaction, the ATP-dependent insertion of CO2 between the N7 and N8 nitrogen atoms of 7,8-diaminopelargonic acid (DAPA, also called 7,8-diammoniononanoate) to form a ureido ring. This is ATP-dependent dethiobiotin synthetase BioD from Mycobacterium sp. (strain KMS).